We begin with the raw amino-acid sequence, 125 residues long: uncharacterized protein (125 aa).

This is an uncharacterized protein from Methanocaldococcus jannaschii (strain ATCC 43067 / DSM 2661 / JAL-1 / JCM 10045 / NBRC 100440) (Methanococcus jannaschii).